Consider the following 513-residue polypeptide: Light-independent protochlorophyllide reductase subunit B (513 aa).

Residue D36 coordinates [4Fe-4S] cluster. The Proton donor role is filled by D299. Position 434–435 (434–435 (GM)) interacts with substrate.

The protein belongs to the ChlB/BchB/BchZ family. In terms of assembly, protochlorophyllide reductase is composed of three subunits; ChlL, ChlN and ChlB. Forms a heterotetramer of two ChlB and two ChlN subunits. It depends on [4Fe-4S] cluster as a cofactor.

It localises to the plastid. It is found in the chloroplast. It catalyses the reaction chlorophyllide a + oxidized 2[4Fe-4S]-[ferredoxin] + 2 ADP + 2 phosphate = protochlorophyllide a + reduced 2[4Fe-4S]-[ferredoxin] + 2 ATP + 2 H2O. The protein operates within porphyrin-containing compound metabolism; chlorophyll biosynthesis (light-independent). Its function is as follows. Component of the dark-operative protochlorophyllide reductase (DPOR) that uses Mg-ATP and reduced ferredoxin to reduce ring D of protochlorophyllide (Pchlide) to form chlorophyllide a (Chlide). This reaction is light-independent. The NB-protein (ChlN-ChlB) is the catalytic component of the complex. The polypeptide is Light-independent protochlorophyllide reductase subunit B (Chaetosphaeridium globosum (Charophycean green alga)).